Here is a 523-residue protein sequence, read N- to C-terminus: 2-isopropylmalate synthase (523 aa).

The Pyruvate carboxyltransferase domain occupies 5–267; that stretch reads VIIFDTTLRD…HTNINHHEIW (263 aa). 4 residues coordinate Mn(2+): aspartate 14, histidine 202, histidine 204, and asparagine 238. Positions 392–523 are regulatory domain; sequence RLDYFSVQSG…QNKENNKETV (132 aa).

This sequence belongs to the alpha-IPM synthase/homocitrate synthase family. LeuA type 1 subfamily. As to quaternary structure, homodimer. Mn(2+) is required as a cofactor.

Its subcellular location is the cytoplasm. It carries out the reaction 3-methyl-2-oxobutanoate + acetyl-CoA + H2O = (2S)-2-isopropylmalate + CoA + H(+). The protein operates within amino-acid biosynthesis; L-leucine biosynthesis; L-leucine from 3-methyl-2-oxobutanoate: step 1/4. In terms of biological role, catalyzes the condensation of the acetyl group of acetyl-CoA with 3-methyl-2-oxobutanoate (2-ketoisovalerate) to form 3-carboxy-3-hydroxy-4-methylpentanoate (2-isopropylmalate). In Salmonella dublin (strain CT_02021853), this protein is 2-isopropylmalate synthase.